A 255-amino-acid chain; its full sequence is Tryptophan synthase alpha chain (255 aa).

Catalysis depends on proton acceptor residues Glu51 and Asp62.

This sequence belongs to the TrpA family. As to quaternary structure, tetramer of two alpha and two beta chains.

It carries out the reaction (1S,2R)-1-C-(indol-3-yl)glycerol 3-phosphate + L-serine = D-glyceraldehyde 3-phosphate + L-tryptophan + H2O. The protein operates within amino-acid biosynthesis; L-tryptophan biosynthesis; L-tryptophan from chorismate: step 5/5. Its function is as follows. The alpha subunit is responsible for the aldol cleavage of indoleglycerol phosphate to indole and glyceraldehyde 3-phosphate. This chain is Tryptophan synthase alpha chain, found in Maridesulfovibrio salexigens (strain ATCC 14822 / DSM 2638 / NCIMB 8403 / VKM B-1763) (Desulfovibrio salexigens).